Here is a 522-residue protein sequence, read N- to C-terminus: Cytochrome P450 9c1 (522 aa).

Cys464 contributes to the heme binding site.

Belongs to the cytochrome P450 family. It depends on heme as a cofactor.

Its subcellular location is the endoplasmic reticulum membrane. The protein localises to the microsome membrane. May be involved in the metabolism of insect hormones and in the breakdown of synthetic insecticides. The protein is Cytochrome P450 9c1 (Cyp9c1) of Drosophila melanogaster (Fruit fly).